The primary structure comprises 123 residues: Holo-[acyl-carrier-protein] synthase (123 aa).

Residues Asp8 and Glu56 each coordinate Mg(2+).

This sequence belongs to the P-Pant transferase superfamily. AcpS family. It depends on Mg(2+) as a cofactor.

The protein localises to the cytoplasm. The catalysed reaction is apo-[ACP] + CoA = holo-[ACP] + adenosine 3',5'-bisphosphate + H(+). In terms of biological role, transfers the 4'-phosphopantetheine moiety from coenzyme A to a Ser of acyl-carrier-protein. This Clostridium beijerinckii (strain ATCC 51743 / NCIMB 8052) (Clostridium acetobutylicum) protein is Holo-[acyl-carrier-protein] synthase.